The primary structure comprises 262 residues: Large ribosomal subunit protein bL9m (262 aa).

The transit peptide at 1–49 (MAASMAPRCSSLLWAGAAWLRQRGIGELLQPRIERSTPGRDFSLSHYQS) directs the protein to the mitochondrion.

Belongs to the bacterial ribosomal protein bL9 family. Component of the mitochondrial ribosome large subunit (39S) which comprises a 16S rRNA and about 50 distinct proteins.

The protein resides in the mitochondrion. This is Large ribosomal subunit protein bL9m (Mrpl9) from Rattus norvegicus (Rat).